The chain runs to 505 residues: Actin nucleation-promoting factor WASL (505 aa).

The residue at position 2 (S2) is an N-acetylserine. A WH1 domain is found at L34–R141. 2 disordered regions span residues L138 to D163 and H184 to T205. Residues K186–L198 show a composition bias toward basic residues. The 14-residue stretch at I203–G216 folds into the CRIB domain. Position 242 is a phosphoserine; by TNK2 (S242). Phosphotyrosine; by FAK1 and TNK2 is present on Y256. The segment at E266 to K406 is disordered. 2 stretches are compositionally biased toward pro residues: residues A276–S364 and V371–L391. Omega-N-methylarginine is present on R307. 2 consecutive WH2 domains span residues N405–V422 and G433–V450. The segment at Q476–D505 is disordered. A phosphoserine mark is found at S484 and S485. The segment covering D486–D505 has biased composition (acidic residues).

As to quaternary structure, binds actin and the Arp2/3 complex. Interacts with CDC42. Interacts with FCHSD1. Interacts with FCHSD2. Binds to SH3 domains of GRB2. Interacts with the C-terminal SH3 domain of DNMBP. Interacts with SNX9. Interacts with the WW domains of PRPF40A/FBP11. Interacts with PTK2/FAK1. Interacts with PACSIN1, PACSIN2 and PACSIN3. Interacts with NOSTRIN. Binds to TNK2. Interacts with SNX33. Interacts with NONO (via second RRM domain); the interaction is direct. Component of a multiprotein complex with NONO and SFPQ; associates with the complex via direct interaction with NONO. (Microbial infection) Interacts with E.coli effector protein EspF(U). Identified in a complex containing at least WASL, BAIAP2L1 and E.coli EspF(U). In terms of assembly, (Microbial infection) Interacts with Shigella flexneri protein IcsA. The interaction with IcsA enhances the affinity of WASL for Arp2/3, thus assembling a tight complex which has maximal activity in actin assembly. In terms of processing, phosphorylation at Ser-242, Tyr-256, Ser-484 and Ser-485 enhances actin polymerization activity.

The protein localises to the cytoplasm. It localises to the cytoskeleton. Its subcellular location is the nucleus. Functionally, regulates actin polymerization by stimulating the actin-nucleating activity of the Arp2/3 complex. Involved in various processes, such as mitosis and cytokinesis, via its role in the regulation of actin polymerization. Together with CDC42, involved in the extension and maintenance of the formation of thin, actin-rich surface projections called filopodia. In addition to its role in the cytoplasm, also plays a role in the nucleus by regulating gene transcription, probably by promoting nuclear actin polymerization. Binds to HSF1/HSTF1 and forms a complex on heat shock promoter elements (HSE) that negatively regulates HSP90 expression. Plays a role in dendrite spine morphogenesis. Decreasing levels of DNMBP (using antisense RNA) alters apical junction morphology in cultured enterocytes, junctions curve instead of being nearly linear. This Homo sapiens (Human) protein is Actin nucleation-promoting factor WASL (WASL).